The sequence spans 205 residues: LexA repressor (205 aa).

Residues 28–48 (RAEIATRLGFKSANAAEEHLK) constitute a DNA-binding region (H-T-H motif). Residues S122 and K159 each act as for autocatalytic cleavage activity in the active site.

Belongs to the peptidase S24 family. Homodimer.

It catalyses the reaction Hydrolysis of Ala-|-Gly bond in repressor LexA.. Represses a number of genes involved in the response to DNA damage (SOS response), including recA and lexA. In the presence of single-stranded DNA, RecA interacts with LexA causing an autocatalytic cleavage which disrupts the DNA-binding part of LexA, leading to derepression of the SOS regulon and eventually DNA repair. This Shewanella denitrificans (strain OS217 / ATCC BAA-1090 / DSM 15013) protein is LexA repressor.